Here is a 198-residue protein sequence, read N- to C-terminus: dITP/XTP pyrophosphatase (198 aa).

T7–K12 lines the substrate pocket. Mg(2+)-binding residues include E40 and D69. D69 (proton acceptor) is an active-site residue. Residues T70, F151–D154, K174, and H179–R180 each bind substrate.

The protein belongs to the HAM1 NTPase family. As to quaternary structure, homodimer. The cofactor is Mg(2+).

It catalyses the reaction XTP + H2O = XMP + diphosphate + H(+). The enzyme catalyses dITP + H2O = dIMP + diphosphate + H(+). It carries out the reaction ITP + H2O = IMP + diphosphate + H(+). In terms of biological role, pyrophosphatase that catalyzes the hydrolysis of nucleoside triphosphates to their monophosphate derivatives, with a high preference for the non-canonical purine nucleotides XTP (xanthosine triphosphate), dITP (deoxyinosine triphosphate) and ITP. Seems to function as a house-cleaning enzyme that removes non-canonical purine nucleotides from the nucleotide pool, thus preventing their incorporation into DNA/RNA and avoiding chromosomal lesions. This Thermoanaerobacter sp. (strain X514) protein is dITP/XTP pyrophosphatase.